Here is a 559-residue protein sequence, read N- to C-terminus: Poly(3-hydroxyalkanoate) polymerase 1 (559 aa).

Residue Cys-296 is part of the active site.

Belongs to the PHA/PHB synthase family. Type II PhaC subfamily.

It functions in the pathway biopolymer metabolism; poly-(R)-3-hydroxybutanoate biosynthesis. Synthesizes poly(3-hydroxyalkanoates) (PHA), complements a mutant of P.putida that does not make PHA. The polypeptide is Poly(3-hydroxyalkanoate) polymerase 1 (Ectopseudomonas oleovorans (Pseudomonas oleovorans)).